The primary structure comprises 677 residues: MPSLDELTISTIRGLSVDAVSAANSGHPGAPLGLAPAAHVVWQKMKFNPKDPNWINRDRFVLSNGHACALLYSLLVLYKFELTVDDLKQFRQLGFKTPGHPEATDTAGVEVTTGPLGQGISNAVGIAIAQKQFAATYNKPDITLSDSYVYTFVGDGCLMEGVSSETSSLAGHLQLNNLIAFWDDNRISIDGDTAVSFTENVPDRYRAYGWNVLEVPDANTNIEAIAAAVDEAKKSTDKPTLIRLVTTIGYGSLKQGSHDVHGSPLKPDDIKQLKKSWGFKEDVDFFIPEEVSEYLAKHVSENQKVQKEWEAKLAEYKKKYPTEGAEIQRRLDGKLPEGWKEYLPKYTPADKPLATRKLSENVINALHGKIPEFIGGSADLTGSNLTRAEGSVDFQPPSTGLGNYDGVYIRYGVREHGMGAIMNGIAAFGANYKNYGGTFLNFVSYAAGALRLSALSHHPVIWVATHDSIGLGEDGPTHQPIETLAHFRAIPNLSVWRPADGNEVSAAYAAAIESTSHPSVIALTRQNLPQLEGSSIENALKGGYTLVKKDNPDVIIVSSGSEVSISVAASEELAKQGVKANVVSLPDFFTFDQQSDEYRLSVLPDGVPILSVEVMSTFGWSKYSHEQFGLNRFGASGKAADLYKYFEFTPEGIAERAQKTIKYYEGKQLLSPLDRAF.

Histidine 27 contacts substrate. Thiamine diphosphate contacts are provided by residues histidine 66 and glycine 114–leucine 116. Residue aspartate 155 participates in Mg(2+) binding. Positions 156 and 185 each coordinate thiamine diphosphate. Mg(2+) is bound by residues asparagine 185 and isoleucine 187. Histidine 261, arginine 356, and serine 383 together coordinate substrate. Histidine 261 provides a ligand contact to thiamine diphosphate. Residues glutamate 415 and phenylalanine 442 each coordinate thiamine diphosphate. The active-site Proton donor is the glutamate 415. Residues histidine 466, aspartate 474, and arginine 525 each contribute to the substrate site.

Belongs to the transketolase family. As to quaternary structure, homodimer. It depends on Mg(2+) as a cofactor. The cofactor is Ca(2+). Mn(2+) serves as cofactor. Co(2+) is required as a cofactor. Requires thiamine diphosphate as cofactor.

It catalyses the reaction D-sedoheptulose 7-phosphate + D-glyceraldehyde 3-phosphate = aldehydo-D-ribose 5-phosphate + D-xylulose 5-phosphate. Catalyzes the transfer of a two-carbon ketol group from a ketose donor to an aldose acceptor, via a covalent intermediate with the cofactor thiamine pyrophosphate. In Candida albicans (Yeast), this protein is Transketolase 1 (TKT1).